We begin with the raw amino-acid sequence, 207 residues long: Probable GTP-binding protein EngB (207 aa).

Residues 23-197 (AGIEVVFAGR…ETVIGRWLFA (175 aa)) enclose the EngB-type G domain. GTP contacts are provided by residues 31–38 (GRSNAGKS), 58–62 (GRTQL), 76–79 (DLPG), 143–146 (TKAD), and 176–178 (FSS). Ser-38 and Thr-60 together coordinate Mg(2+).

It belongs to the TRAFAC class TrmE-Era-EngA-EngB-Septin-like GTPase superfamily. EngB GTPase family. It depends on Mg(2+) as a cofactor.

In terms of biological role, necessary for normal cell division and for the maintenance of normal septation. This chain is Probable GTP-binding protein EngB, found in Methylobacillus flagellatus (strain ATCC 51484 / DSM 6875 / VKM B-1610 / KT).